Consider the following 79-residue polypeptide: MPKRILEGVVVSDKGDKTVVVKVERTIVHPVLKKIVRQSKKYHAHDEANAYKAGEAIRIIECAPKSKLKTWEVLPKASA.

It belongs to the universal ribosomal protein uS17 family. In terms of assembly, part of the 30S ribosomal subunit.

One of the primary rRNA binding proteins, it binds specifically to the 5'-end of 16S ribosomal RNA. This is Small ribosomal subunit protein uS17 from Caulobacter vibrioides (strain NA1000 / CB15N) (Caulobacter crescentus).